A 261-amino-acid polypeptide reads, in one-letter code: Cytochrome c oxidase subunit 3 (261 aa).

At 1 to 15 the chain is on the mitochondrial matrix side; sequence MTHQTHAYHMVNPSP. A helical transmembrane segment spans residues 16-34; the sequence is WPLTGALSALLLTSGLIMW. The Mitochondrial intermembrane portion of the chain corresponds to 35–40; it reads FHFNSF. The chain crosses the membrane as a helical span at residues 41 to 66; the sequence is LLVIIGLTCMLLTMYQWWRDIVREGT. Residues 67–72 are Mitochondrial matrix-facing; it reads FQGHHT. Residues 73–105 form a helical membrane-spanning segment; the sequence is PVVQKGLRYGMVLFIVSEVFFFLGFFWAFYHSS. At 106-128 the chain is on the mitochondrial intermembrane side; it reads LAPTPELGGCWPPTGIHPLNPLE. The helical transmembrane segment at 129 to 152 threads the bilayer; the sequence is VPLLNTSILLASGVSITWAHHSLM. The Mitochondrial matrix segment spans residues 153–155; sequence EGN. Residues 156-183 form a helical membrane-spanning segment; sequence RKQMIQALSITILLGIYFTILQASEYYE. At 184–190 the chain is on the mitochondrial intermembrane side; the sequence is SSFTISD. Residues 191–223 traverse the membrane as a helical segment; that stretch reads GVYGSTFFVATGFHGLHVIIGTTFLIVCLLRQF. Over 224–232 the chain is Mitochondrial matrix; it reads NFHFTSTHH. Residues 233–256 form a helical membrane-spanning segment; sequence FGFEAAAWYWHFVDVVWLFLYVSI. Residues 257-261 are Mitochondrial intermembrane-facing; that stretch reads YWWGS.

The protein belongs to the cytochrome c oxidase subunit 3 family. In terms of assembly, component of the cytochrome c oxidase (complex IV, CIV), a multisubunit enzyme composed of 14 subunits. The complex is composed of a catalytic core of 3 subunits MT-CO1, MT-CO2 and MT-CO3, encoded in the mitochondrial DNA, and 11 supernumerary subunits COX4I, COX5A, COX5B, COX6A, COX6B, COX6C, COX7A, COX7B, COX7C, COX8 and NDUFA4, which are encoded in the nuclear genome. The complex exists as a monomer or a dimer and forms supercomplexes (SCs) in the inner mitochondrial membrane with NADH-ubiquinone oxidoreductase (complex I, CI) and ubiquinol-cytochrome c oxidoreductase (cytochrome b-c1 complex, complex III, CIII), resulting in different assemblies (supercomplex SCI(1)III(2)IV(1) and megacomplex MCI(2)III(2)IV(2)).

The protein resides in the mitochondrion inner membrane. It catalyses the reaction 4 Fe(II)-[cytochrome c] + O2 + 8 H(+)(in) = 4 Fe(III)-[cytochrome c] + 2 H2O + 4 H(+)(out). Functionally, component of the cytochrome c oxidase, the last enzyme in the mitochondrial electron transport chain which drives oxidative phosphorylation. The respiratory chain contains 3 multisubunit complexes succinate dehydrogenase (complex II, CII), ubiquinol-cytochrome c oxidoreductase (cytochrome b-c1 complex, complex III, CIII) and cytochrome c oxidase (complex IV, CIV), that cooperate to transfer electrons derived from NADH and succinate to molecular oxygen, creating an electrochemical gradient over the inner membrane that drives transmembrane transport and the ATP synthase. Cytochrome c oxidase is the component of the respiratory chain that catalyzes the reduction of oxygen to water. Electrons originating from reduced cytochrome c in the intermembrane space (IMS) are transferred via the dinuclear copper A center (CU(A)) of subunit 2 and heme A of subunit 1 to the active site in subunit 1, a binuclear center (BNC) formed by heme A3 and copper B (CU(B)). The BNC reduces molecular oxygen to 2 water molecules using 4 electrons from cytochrome c in the IMS and 4 protons from the mitochondrial matrix. This is Cytochrome c oxidase subunit 3 (MT-CO3) from Osphranter robustus (Wallaroo).